The sequence spans 552 residues: MKDIEIAQKSEMLPITEVAQKVGLTADEIEQYGKYKAKISLPLSAREQTKRKLVLVTAINPTPAGEGKSTVTVGLGDAFSLLNKKVMIALREPSLGPVMGMKGGATGGGYSQVVPMEDINLHFTGDMHALTTANNTLAALIDNHIYQGNKLNIDQRRVIWKRVLDINDRALRHVVIGLGGATQGIPREDGFDITVASELMAILCLSKDISDLKKRIGQIVIGYNFDKEPVTVDQLGVTGAITLLLKDACKPNLVQTLAHTPAIVHGGPFANIAHGCNSVLATQTALNLADYTITEAGFGADLGAEKFLDIKTPVLGKTPDTIVIVATARALKMNGGVAKDNLDEENVAAVEQGFANLKKHIQSMKRYNVPVVVAINKFTQDTDAELAKIVELCEQDDTKAIVADVWAKGGEGATELAKAVIESCDNDQEFTRLYNSDDSVEEKINKIVTEIYGGDGVEFSAKAKRQLRQFEKLGWNHLPVCMAKTQYSLSDNAKVLGAPKGFKIHVREFVPKLGAQFLVALTGNILTMPGLPKVPAADGMDVDENGKISGLY.

62 to 69 (TPAGEGKS) lines the ATP pocket.

It belongs to the formate--tetrahydrofolate ligase family.

It catalyses the reaction (6S)-5,6,7,8-tetrahydrofolate + formate + ATP = (6R)-10-formyltetrahydrofolate + ADP + phosphate. It functions in the pathway one-carbon metabolism; tetrahydrofolate interconversion. The chain is Formate--tetrahydrofolate ligase from Ligilactobacillus salivarius (strain UCC118) (Lactobacillus salivarius).